The chain runs to 343 residues: Probable magnesium transporter NIPA4 (343 aa).

Topologically, residues 1 to 18 (MAESSGSWRDSYKGMSSD) are extracellular. Residues 19-39 (NIKGLVLALSSSLFIGASFIV) traverse the membrane as a helical segment. The Cytoplasmic segment spans residues 40-66 (KKKGLKKAASTGTRAGVGGYSYLYEPL). The helical transmembrane segment at 67-87 (WWIGMTTMLLGEIANFAAYAF) threads the bilayer. Residues 88-90 (APA) are Extracellular-facing. The helical transmembrane segment at 91 to 111 (ILVTPLGAVSIIISAVLAHII) threads the bilayer. The Cytoplasmic portion of the chain corresponds to 112–115 (LREK). A helical transmembrane segment spans residues 116–136 (LHIFGILGCALCVVGSTTIVL). At 137–157 (HAPQEREIDSVIEVWNLATEP) the chain is on the extracellular side. A helical membrane pass occupies residues 158-178 (AFMFYASLVIGAAVFLIIRFV). At 179–189 (PQYGQTNVMVY) the chain is on the cytoplasmic side. A helical membrane pass occupies residues 190–210 (IGICSLVGSLSVMSVKALGIA). Residues 211–220 (LKLTFSGTNQ) are Extracellular-facing. Residues 221–241 (LFYPQTWIFTLVVLTCVVTQL) form a helical membrane-spanning segment. The Cytoplasmic segment spans residues 242–254 (NYLNKALDTFNTA). A helical membrane pass occupies residues 255–275 (IVSPIYYVMFTSLTILASVIM). Over 276-283 (FKDWDRQN) the chain is Extracellular. Residues 284–304 (GTQIVTEICGFVTILSGTFLL) form a helical membrane-spanning segment. The Cytoplasmic portion of the chain corresponds to 305-343 (HRTKDMVEGSSVILPLRISKHINEEEGIPLRRQESLRSP).

The protein belongs to the NIPA (TC 2.A.7) family. As to quaternary structure, homodimer.

Its subcellular location is the cell membrane. It is found in the early endosome. In terms of biological role, acts as a Mg(2+) transporter. Can also transport other divalent cations such as Fe(2+), Sr(2+), Ba(2+), Mn(2+) and Co(2+) but to a much less extent than Mg(2+). The polypeptide is Probable magnesium transporter NIPA4 (Arabidopsis thaliana (Mouse-ear cress)).